Here is a 384-residue protein sequence, read N- to C-terminus: Endoglucanase (384 aa).

An N-terminal signal peptide occupies residues 1–25; the sequence is MTRRRLLHAGTLAGVAALLPAAALA. Residue glutamate 63 is the Proton donor of the active site. Aspartate 124 functions as the Nucleophile in the catalytic mechanism.

This sequence belongs to the glycosyl hydrolase 8 (cellulase D) family.

Its subcellular location is the secreted. It catalyses the reaction Endohydrolysis of (1-&gt;4)-beta-D-glucosidic linkages in cellulose, lichenin and cereal beta-D-glucans.. Its pathway is glycan metabolism; bacterial cellulose biosynthesis. In terms of biological role, hydrolyzes carboxymethylcellulose. This Xanthomonas axonopodis pv. citri (strain 306) protein is Endoglucanase (bcsZ).